Here is a 1705-residue protein sequence, read N- to C-terminus: Alpha-protein kinase 3 (1705 aa).

Low complexity predominate over residues 1–10; the sequence is MGSRRAPSRG. A disordered region spans residues 1 to 33; the sequence is MGSRRAPSRGWGAGGRSGAGGDGEDDGPVWIPS. Residues 11–21 show a composition bias toward gly residues; the sequence is WGAGGRSGAGG. Residues 77 to 168 enclose the Ig-like 1 domain; the sequence is PLFETTLKSR…GIVSCSGVLE (92 aa). Positions 211 to 221 are enriched in basic and acidic residues; it reads DTLRKLSPDRF. 5 disordered regions span residues 211-244, 308-749, 792-845, 1082-1145, and 1173-1226; these read DTLR…EPEG, LKEE…GPRA, GPLS…ERPG, GLAS…KFPG, and RAAG…MLEV. The residue at position 228 (Ser228) is a Phosphoserine. Positions 308–342 are enriched in basic and acidic residues; that stretch reads LKEESGAKKKKKDEESKQGLRKPELEKAAQSRRSS. Residues 370–382 are compositionally biased toward low complexity; sequence PRGRAARGPGSSG. Over residues 495 to 504 the composition is skewed to polar residues; the sequence is DSKPISSLSQ. Low complexity predominate over residues 557 to 579; that stretch reads TTTAPTMSASSSSDVASIGVSTS. Positions 598–609 are enriched in polar residues; that stretch reads TSANQRTGSKKN. Over residues 647 to 657 the composition is skewed to basic and acidic residues; it reads ESKRPQSDRSA. Over residues 666-676 the composition is skewed to polar residues; that stretch reads RAETQLETTQA. Residues 679 to 700 show a composition bias toward basic and acidic residues; it reads KIQEDRKAQADKGTQEDRRMQG. Residues 708–729 are compositionally biased toward polar residues; that stretch reads KGTQSEGSAPTAMEGQSEQEVA. The span at 736–745 shows a compositional bias: pro residues; the sequence is SRTPKLPPTA. Positions 829–844 are enriched in basic and acidic residues; sequence AKQEDSPFQCPKEERP. Over residues 1120-1131 the composition is skewed to low complexity; sequence GQAAPGQGPSAE. Ser1222 carries the post-translational modification Phosphoserine. The Ig-like 2 domain maps to 1274-1362; the sequence is PQVIRKIRVE…GSASTDFCLS (89 aa). Cys1296 and Cys1346 are disulfide-bonded. Residues 1390–1625 form the Alpha-type protein kinase domain; it reads KGLADSGCWG…YCELLGLTPL (236 aa). Residues 1628 to 1705 are disordered; sequence PEAAHPQAKA…EEGSKAQGMR (78 aa). Polar residues predominate over residues 1664–1696; that stretch reads PQGTRKSAPSSKATPQASEPVTTQLLGQPPTQE.

This sequence belongs to the protein kinase superfamily. Alpha-type protein kinase family. ALPK subfamily.

The protein localises to the nucleus. It carries out the reaction L-seryl-[protein] + ATP = O-phospho-L-seryl-[protein] + ADP + H(+). The enzyme catalyses L-threonyl-[protein] + ATP = O-phospho-L-threonyl-[protein] + ADP + H(+). Involved in cardiomyocyte differentiation. This is Alpha-protein kinase 3 from Homo sapiens (Human).